The sequence spans 350 residues: 3-isopropylmalate dehydrogenase (350 aa).

76-87 serves as a coordination point for NAD(+); it reads GPKWDNAPKRPE. Residues Arg94, Arg104, Arg132, and Asp217 each contribute to the substrate site. Asp217, Asp241, and Asp245 together coordinate Mg(2+). Residue 275 to 287 coordinates NAD(+); the sequence is GSAPDIANQNIAN.

It belongs to the isocitrate and isopropylmalate dehydrogenases family. LeuB type 1 subfamily. Homodimer. The cofactor is Mg(2+). Mn(2+) is required as a cofactor.

Its subcellular location is the cytoplasm. It catalyses the reaction (2R,3S)-3-isopropylmalate + NAD(+) = 4-methyl-2-oxopentanoate + CO2 + NADH. The protein operates within amino-acid biosynthesis; L-leucine biosynthesis; L-leucine from 3-methyl-2-oxobutanoate: step 3/4. Its function is as follows. Catalyzes the oxidation of 3-carboxy-2-hydroxy-4-methylpentanoate (3-isopropylmalate) to 3-carboxy-4-methyl-2-oxopentanoate. The product decarboxylates to 4-methyl-2 oxopentanoate. This chain is 3-isopropylmalate dehydrogenase, found in Listeria innocua serovar 6a (strain ATCC BAA-680 / CLIP 11262).